The sequence spans 541 residues: Membrane protein insertase YidC (541 aa).

A helical membrane pass occupies residues 6-26; sequence SLLVLALIFISFLVYQQWQLD. The tract at residues 34 to 56 is disordered; sequence EQTTSITATSDVPASSPSNSQAI. The next 4 helical transmembrane spans lie at 337–357, 416–436, 454–474, and 495–515; these read FWLL…IICV, LGGC…YWTF, LSAQ…MFLL, and PLVF…YWLV.

This sequence belongs to the OXA1/ALB3/YidC family. Type 1 subfamily. Interacts with the Sec translocase complex via SecD. Specifically interacts with transmembrane segments of nascent integral membrane proteins during membrane integration.

It localises to the cell inner membrane. In terms of biological role, required for the insertion and/or proper folding and/or complex formation of integral membrane proteins into the membrane. Involved in integration of membrane proteins that insert both dependently and independently of the Sec translocase complex, as well as at least some lipoproteins. Aids folding of multispanning membrane proteins. This chain is Membrane protein insertase YidC, found in Haemophilus influenzae (strain 86-028NP).